The primary structure comprises 273 residues: HTH-type transcriptional activator RhaS (273 aa).

The 99-residue stretch at 174-272 (YQLLDWLQNN…SQSPRDLRSQ (99 aa)) folds into the HTH araC/xylS-type domain. 2 DNA-binding regions (H-T-H motif) span residues 191–212 (PELA…KNKT) and 239–262 (VTDI…KREF).

As to quaternary structure, binds DNA as a dimer.

Its subcellular location is the cytoplasm. In terms of biological role, activates expression of the rhaBAD and rhaT operons. This is HTH-type transcriptional activator RhaS from Yersinia pestis bv. Antiqua (strain Angola).